The primary structure comprises 399 residues: Serine/threonine-protein kinase PknL (399 aa).

At 1-368 (MVEAGTRDPL…FIWARQHARR (368 aa)) the chain is on the cytoplasmic side. Residues 19–278 (YLVQAKIASG…IAMGADLEAI (260 aa)) enclose the Protein kinase domain. ATP-binding positions include 25–33 (IASGGTSTV) and lysine 48. Catalysis depends on aspartate 142, which acts as the Proton acceptor. The segment at 312-346 (GQLGAKPVHHPTRQLTRQPGDCSEPASGSEPEHEP) is disordered. The helical transmembrane segment at 369–389 (MVLVWVSVVLAITGLVASAAW) threads the bilayer. Over 390-399 (TIGSNLSGLL) the chain is Extracellular.

It belongs to the protein kinase superfamily. Ser/Thr protein kinase family. Autophosphorylated.

The protein localises to the cell membrane. It catalyses the reaction L-seryl-[protein] + ATP = O-phospho-L-seryl-[protein] + ADP + H(+). It carries out the reaction L-threonyl-[protein] + ATP = O-phospho-L-threonyl-[protein] + ADP + H(+). The protein is Serine/threonine-protein kinase PknL (pknL) of Mycobacterium bovis (strain ATCC BAA-935 / AF2122/97).